Consider the following 586-residue polypeptide: Arginine--tRNA ligase (586 aa).

The 'HIGH' region motif lies at Ala-131 to His-141.

This sequence belongs to the class-I aminoacyl-tRNA synthetase family. As to quaternary structure, monomer.

It is found in the cytoplasm. The enzyme catalyses tRNA(Arg) + L-arginine + ATP = L-arginyl-tRNA(Arg) + AMP + diphosphate. The chain is Arginine--tRNA ligase from Nitrosomonas eutropha (strain DSM 101675 / C91 / Nm57).